The chain runs to 185 residues: Elongation factor P (185 aa).

It belongs to the elongation factor P family.

It is found in the cytoplasm. The protein operates within protein biosynthesis; polypeptide chain elongation. Functionally, involved in peptide bond synthesis. Stimulates efficient translation and peptide-bond synthesis on native or reconstituted 70S ribosomes in vitro. Probably functions indirectly by altering the affinity of the ribosome for aminoacyl-tRNA, thus increasing their reactivity as acceptors for peptidyl transferase. This chain is Elongation factor P, found in Gloeothece citriformis (strain PCC 7424) (Cyanothece sp. (strain PCC 7424)).